The primary structure comprises 192 residues: Glycerol-3-phosphate acyltransferase (192 aa).

The next 5 helical transmembrane spans lie at Phe-4–Ile-24, Leu-48–Tyr-68, Tyr-74–Phe-94, Gly-101–Leu-121, and Leu-125–Leu-145.

It belongs to the PlsY family. Probably interacts with PlsX.

The protein localises to the cell inner membrane. It catalyses the reaction an acyl phosphate + sn-glycerol 3-phosphate = a 1-acyl-sn-glycero-3-phosphate + phosphate. Its pathway is lipid metabolism; phospholipid metabolism. Its function is as follows. Catalyzes the transfer of an acyl group from acyl-phosphate (acyl-PO(4)) to glycerol-3-phosphate (G3P) to form lysophosphatidic acid (LPA). This enzyme utilizes acyl-phosphate as fatty acyl donor, but not acyl-CoA or acyl-ACP. This Histophilus somni (strain 129Pt) (Haemophilus somnus) protein is Glycerol-3-phosphate acyltransferase.